Reading from the N-terminus, the 616-residue chain is MDEEETAEINAQEQEVAGSAGEAAAGPSGAEVQPNDDSVAVERVIDVFEETAEMEAAMIERFFGPSGEVAEEGTLPVPGPSADGEGSANAGGERPSEEDIVLDDGTESDGSYNRPGSDMSLDSPNSEDDSDVEAMPRWMIPQNRLRFAVDMMVSQARNQDGGIAALLNRDNFLQRVRSMVFSQERRRSRNSDEVSPEAEDDELPEHPPPPPPRPPIDIDMEEGVHFDTNLPAEHSYFGPNLNRVPGVNYQEVGSTHHMLIFLHQYILFPGEVLPFMIDGSLFDDDMSGLDGLIFAVAFPLMKPPEDSKKLYGVTCQIYEKGDNGRHLTFYKSRALQRIVINCSDIKGLPQYIARNPTNKCHSKVKILPEYFLPEPLKCIDMGSMSRFRDIPSMRDKYLRYQISSTPWPVEVCQEYAYEDIVERARKKLEVHKIDTMPKCPIQMSFWLVRNLHLTEKMMSQMFLTDSVNLRLQLIGGILKEETLFYCRYCNSSLAYCSDLFAMSKHGVQTQYCNPGGYIHETNTVYRVISHAIGYSGEPSTRFSWFPGYQWHIILCKFCAQHVGWEFKAVEPNLAPKVFYGLAGSSVRIGKAGDSATVNGNNFVVRNMLRVISEGME.

3 disordered regions span residues 1–39 (MDEE…DDSV), 63–137 (FGPS…AMPR), and 182–220 (SQER…DIDM). The span at 11 to 32 (AQEQEVAGSAGEAAAGPSGAEV) shows a compositional bias: low complexity. A compositionally biased stretch (acidic residues) spans 96–107 (SEEDIVLDDGTE). Positions 183–192 (QERRRSRNSD) are enriched in basic and acidic residues. The segment covering 194–203 (VSPEAEDDEL) has biased composition (acidic residues). The span at 206-215 (HPPPPPPRPP) shows a compositional bias: pro residues. A Lon N-terminal domain is found at 257–482 (HMLIFLHQYI…LIGGILKEET (226 aa)). The CULT domain maps to 481-590 (ETLFYCRYCN…LAGSSVRIGK (110 aa)). Residues Cys-486, Cys-489, Cys-555, and Cys-558 each coordinate Zn(2+).

Belongs to the CRBN family. Likely a component of a DCX (DDB1-CUL4-X-box) protein ligase complex. May interact with pic/DDB1. Ubiquitinated.

It localises to the nucleus. It participates in protein modification; protein ubiquitination. Substrate recognition component of a DCX (DDB1-CUL4-X-box) E3 protein ligase complex that mediates the ubiquitination and subsequent proteasomal degradation of target proteins. Has an essential role in mediating growth by negatively regulating insulin signaling. It also has a role in maintaining presynaptic function in the neuromuscular junction synapses of third-instar larvae. The protein is Protein cereblon of Drosophila persimilis (Fruit fly).